A 212-amino-acid polypeptide reads, in one-letter code: Large ribosomal subunit protein bL25 (212 aa).

A disordered region spans residues 1–25 (MSQSTIHKIAVKKRTETGKNENNRL). The segment covering 13–24 (KRTETGKNENNR) has biased composition (basic and acidic residues).

Belongs to the bacterial ribosomal protein bL25 family. CTC subfamily. Part of the 50S ribosomal subunit; part of the 5S rRNA/L5/L18/L25 subcomplex. Contacts the 5S rRNA. Binds to the 5S rRNA independently of L5 and L18.

Its function is as follows. This is one of the proteins that binds to the 5S RNA in the ribosome where it forms part of the central protuberance. This is Large ribosomal subunit protein bL25 from Leptospira borgpetersenii serovar Hardjo-bovis (strain L550).